The chain runs to 178 residues: Conodipine-P1 (178 aa).

The N-terminal stretch at 1–24 is a signal peptide; it reads MKLLAPVLWAMAALGVTWLVAVDS. A 4-hydroxyproline; partial mark is found at Pro-38, Pro-42, and Pro-49. His-54 is an active-site residue. A propeptide spans 98–130 (interchain peptide); it reads KREVTSHRATSIAHSRLWKTALDQKSFLNRKAR. Pyrrolidone carboxylic acid is present on Gln-131. A 4-hydroxyproline; partial modification is found at Pro-137.

The protein belongs to the phospholipase A2 family. Group IX subfamily. As to quaternary structure, heterodimer of an alpha and a beta chain; probably disulfide-linked. It depends on Ca(2+) as a cofactor. Expressed by the venom duct.

It is found in the secreted. The catalysed reaction is a 1,2-diacyl-sn-glycero-3-phosphocholine + H2O = a 1-acyl-sn-glycero-3-phosphocholine + a fatty acid + H(+). Its function is as follows. Catalyzes the calcium-dependent hydrolysis of the 2-acyl groups in 3-sn-phosphoglycerides. The polypeptide is Conodipine-P1 (Conus purpurascens (Purple cone)).